Here is a 507-residue protein sequence, read N- to C-terminus: ATP synthase subunit alpha, mitochondrial (507 aa).

Residue glycine 171 to threonine 178 participates in ATP binding.

The protein belongs to the ATPase alpha/beta chains family. In terms of assembly, F-type ATPases have 2 components, CF(1) - the catalytic core - and CF(0) - the membrane proton channel. CF(1) has five subunits: alpha(3), beta(3), gamma(1), delta(1), epsilon(1). CF(0) has three main subunits: a, b and c.

The protein resides in the mitochondrion. It is found in the mitochondrion inner membrane. Functionally, mitochondrial membrane ATP synthase (F(1)F(0) ATP synthase or Complex V) produces ATP from ADP in the presence of a proton gradient across the membrane which is generated by electron transport complexes of the respiratory chain. F-type ATPases consist of two structural domains, F(1) - containing the extramembraneous catalytic core, and F(0) - containing the membrane proton channel, linked together by a central stalk and a peripheral stalk. During catalysis, ATP synthesis in the catalytic domain of F(1) is coupled via a rotary mechanism of the central stalk subunits to proton translocation. Subunits alpha and beta form the catalytic core in F(1). Rotation of the central stalk against the surrounding alpha(3)beta(3) subunits leads to hydrolysis of ATP in three separate catalytic sites on the beta subunits. Subunit alpha does not bear the catalytic high-affinity ATP-binding sites. This is ATP synthase subunit alpha, mitochondrial (ATPA) from Raphanus sativus (Radish).